The following is a 569-amino-acid chain: Rab GTPase-binding effector protein 2 (569 aa).

3 disordered regions span residues 1–41 (MAAA…GELS), 180–265 (IQRR…ETAS), and 388–411 (RAEQ…ESLP). N-acetylalanine is present on Ala2. Positions 34 to 187 (EAESGELSRL…QEIQRRPRHA (154 aa)) form a coiled coil. Phosphoserine occurs at positions 189 and 193. Ser200 carries the phosphoserine; by GSK3-alpha modification. Ser204 carries the post-translational modification Phosphoserine. 2 stretches are compositionally biased toward low complexity: residues 245–257 (SSSS…QGLS) and 393–403 (PSSAPQGSQQE). Residues 289–523 (DTQWEQLQTE…LQAELETSEQ (235 aa)) adopt a coiled-coil conformation.

The protein belongs to the rabaptin family. In terms of assembly, heterodimer with RABGEF1. The dimer binds RAB5A that has been activated by GTP-binding. Interacts with SDCCAG8; this interaction is important for ciliogenesis regulation. Interacts with RAB4A; this interaction may mediate VEGFR2 cell surface expression.

Its subcellular location is the cytoplasm. The protein resides in the early endosome. It localises to the cytoskeleton. It is found in the microtubule organizing center. The protein localises to the centrosome. Its subcellular location is the cilium basal body. Plays a role in membrane trafficking and in homotypic early endosome fusion. Participates in arteriogenesis by regulating vascular endothelial growth factor receptor 2/VEGFR2 cell surface expression and endosomal trafficking. By interacting with SDCCAG8, localizes to centrosomes and plays a critical role in ciliogenesis. The polypeptide is Rab GTPase-binding effector protein 2 (RABEP2) (Homo sapiens (Human)).